The primary structure comprises 451 residues: Methylenetetrahydrofolate--tRNA-(uracil-5-)-methyltransferase TrmFO (451 aa).

9–14 (GGGMAG) contacts FAD.

Belongs to the MnmG family. TrmFO subfamily. FAD serves as cofactor.

The protein localises to the cytoplasm. The catalysed reaction is uridine(54) in tRNA + (6R)-5,10-methylene-5,6,7,8-tetrahydrofolate + NADH + H(+) = 5-methyluridine(54) in tRNA + (6S)-5,6,7,8-tetrahydrofolate + NAD(+). It catalyses the reaction uridine(54) in tRNA + (6R)-5,10-methylene-5,6,7,8-tetrahydrofolate + NADPH + H(+) = 5-methyluridine(54) in tRNA + (6S)-5,6,7,8-tetrahydrofolate + NADP(+). Its function is as follows. Catalyzes the folate-dependent formation of 5-methyl-uridine at position 54 (M-5-U54) in all tRNAs. This is Methylenetetrahydrofolate--tRNA-(uracil-5-)-methyltransferase TrmFO from Dinoroseobacter shibae (strain DSM 16493 / NCIMB 14021 / DFL 12).